Reading from the N-terminus, the 344-residue chain is Protein RecA (344 aa).

ATP is bound at residue 65–72 (GPESSGKT). A compositionally biased stretch (basic and acidic residues) spans 323 to 337 (ELREKFQPAEAPREA). The segment at 323-344 (ELREKFQPAEAPREAGDDEDKE) is disordered.

This sequence belongs to the RecA family.

It localises to the cytoplasm. Functionally, can catalyze the hydrolysis of ATP in the presence of single-stranded DNA, the ATP-dependent uptake of single-stranded DNA by duplex DNA, and the ATP-dependent hybridization of homologous single-stranded DNAs. It interacts with LexA causing its activation and leading to its autocatalytic cleavage. The sequence is that of Protein RecA from Xanthomonas axonopodis pv. citri (strain 306).